The following is a 113-amino-acid chain: UPF0122 protein MGAS10270_Spy1030 (113 aa).

Belongs to the UPF0122 family.

Might take part in the signal recognition particle (SRP) pathway. This is inferred from the conservation of its genetic proximity to ftsY/ffh. May be a regulatory protein. This Streptococcus pyogenes serotype M2 (strain MGAS10270) protein is UPF0122 protein MGAS10270_Spy1030.